Here is a 61-residue protein sequence, read N- to C-terminus: UPF0434 protein PSPA7_2181 (61 aa).

The protein belongs to the UPF0434 family.

The chain is UPF0434 protein PSPA7_2181 from Pseudomonas paraeruginosa (strain DSM 24068 / PA7) (Pseudomonas aeruginosa (strain PA7)).